The sequence spans 244 residues: Sugar fermentation stimulation protein homolog (244 aa).

Belongs to the SfsA family.

This is Sugar fermentation stimulation protein homolog from Dinoroseobacter shibae (strain DSM 16493 / NCIMB 14021 / DFL 12).